The primary structure comprises 907 residues: Protein translocase subunit SecA (907 aa).

ATP contacts are provided by residues Gln87, 105–109, and Asp512; that span reads GEGKT. The disordered stretch occupies residues 834 to 907; the sequence is QSDVDDMEQR…KYKQCHGKLS (74 aa). The span at 840-856 shows a compositional bias: basic and acidic residues; it reads MEQRRREEEAKIQRDYQ. Polar residues predominate over residues 865-876; sequence DESQASSDNTPK. A compositionally biased stretch (basic and acidic residues) spans 878 to 887; sequence MIREGDKVGR. Zn(2+) contacts are provided by Cys891, Cys893, Cys902, and His903. The segment covering 897–907 has biased composition (basic residues); sequence KKYKQCHGKLS.

It belongs to the SecA family. As to quaternary structure, monomer and homodimer. Part of the essential Sec protein translocation apparatus which comprises SecA, SecYEG and auxiliary proteins SecDF-YajC and YidC. Zn(2+) is required as a cofactor.

The protein localises to the cell inner membrane. Its subcellular location is the cytoplasm. The enzyme catalyses ATP + H2O + cellular proteinSide 1 = ADP + phosphate + cellular proteinSide 2.. In terms of biological role, part of the Sec protein translocase complex. Interacts with the SecYEG preprotein conducting channel. Has a central role in coupling the hydrolysis of ATP to the transfer of proteins into and across the cell membrane, serving both as a receptor for the preprotein-SecB complex and as an ATP-driven molecular motor driving the stepwise translocation of polypeptide chains across the membrane. In Shewanella denitrificans (strain OS217 / ATCC BAA-1090 / DSM 15013), this protein is Protein translocase subunit SecA.